The sequence spans 163 residues: Aspartate 1-decarboxylase (163 aa).

Ser-25 acts as the Schiff-base intermediate with substrate; via pyruvic acid in catalysis. Ser-25 bears the Pyruvic acid (Ser) mark. Thr-57 is a substrate binding site. Tyr-58 acts as the Proton donor in catalysis. Position 73–75 (73–75) interacts with substrate; the sequence is GAA.

The protein belongs to the PanD family. Heterooctamer of four alpha and four beta subunits. Pyruvate is required as a cofactor. Post-translationally, is synthesized initially as an inactive proenzyme, which is activated by self-cleavage at a specific serine bond to produce a beta-subunit with a hydroxyl group at its C-terminus and an alpha-subunit with a pyruvoyl group at its N-terminus.

It is found in the cytoplasm. It carries out the reaction L-aspartate + H(+) = beta-alanine + CO2. Its pathway is cofactor biosynthesis; (R)-pantothenate biosynthesis; beta-alanine from L-aspartate: step 1/1. In terms of biological role, catalyzes the pyruvoyl-dependent decarboxylation of aspartate to produce beta-alanine. The chain is Aspartate 1-decarboxylase from Saccharopolyspora erythraea (strain ATCC 11635 / DSM 40517 / JCM 4748 / NBRC 13426 / NCIMB 8594 / NRRL 2338).